Consider the following 282-residue polypeptide: Elongation factor Ts (282 aa).

The involved in Mg(2+) ion dislocation from EF-Tu stretch occupies residues 80–83 (TDFV).

This sequence belongs to the EF-Ts family.

It is found in the cytoplasm. Associates with the EF-Tu.GDP complex and induces the exchange of GDP to GTP. It remains bound to the aminoacyl-tRNA.EF-Tu.GTP complex up to the GTP hydrolysis stage on the ribosome. The chain is Elongation factor Ts (tsf) from Chlamydia muridarum (strain MoPn / Nigg).